The following is a 786-amino-acid chain: Cas scaffolding protein family member 4 (786 aa).

The region spanning 11–73 is the SH3 domain; that stretch reads PKALLARALY…PANRLQILTE (63 aa). Ser-200 and Ser-249 each carry phosphoserine. Positions 262-295 are disordered; the sequence is SFAEESRPHALPSSSSTFYNPPSGRSRSLTPQLN. The segment covering 273–295 has biased composition (polar residues); the sequence is PSSSSTFYNPPSGRSRSLTPQLN. Ser-305 carries the post-translational modification Phosphoserine. Disordered stretches follow at residues 361–429 and 612–670; these read QAGK…SEES and IQPP…ERKP. Over residues 364–373 the composition is skewed to basic and acidic residues; the sequence is KELEKAKEVS. The span at 374-391 shows a compositional bias: polar residues; the sequence is ENSAGHNSSWFSRRTTSP. Phosphoserine occurs at positions 376 and 390. Over residues 399-427 the composition is skewed to low complexity; the sequence is SGSSSDSRASIVSSCSTTSTDDSSSSSSE. Residues 630 to 642 are compositionally biased toward basic and acidic residues; it reads KQREDEHSSELLK.

Belongs to the CAS family. As to quaternary structure, interacts (via SH3 domain) with PTK2/FAK1 (via C-terminus). Phosphorylated on tyrosines by SRC. In terms of tissue distribution, expressed abundantly in lung and spleen. Also highly expressed in ovarian and leukemia cell lines.

The protein resides in the cytoplasm. It localises to the cytoskeleton. The protein localises to the cell junction. Its subcellular location is the focal adhesion. Its function is as follows. Docking protein that plays a role in tyrosine kinase-based signaling related to cell adhesion and cell spreading. Regulates PTK2/FAK1 activity, focal adhesion integrity, and cell spreading. This is Cas scaffolding protein family member 4 (CASS4) from Homo sapiens (Human).